The primary structure comprises 175 residues: Nicotinamide-nucleotide adenylyltransferase 1 (175 aa).

It belongs to the archaeal NMN adenylyltransferase family.

The protein resides in the cytoplasm. The enzyme catalyses beta-nicotinamide D-ribonucleotide + ATP + H(+) = diphosphate + NAD(+). Its pathway is cofactor biosynthesis; NAD(+) biosynthesis; NAD(+) from nicotinamide D-ribonucleotide: step 1/1. The chain is Nicotinamide-nucleotide adenylyltransferase 1 from Sulfolobus acidocaldarius (strain ATCC 33909 / DSM 639 / JCM 8929 / NBRC 15157 / NCIMB 11770).